A 656-amino-acid chain; its full sequence is Chaperone protein DnaK (656 aa).

Residues 590 to 605 (GGAAGGAAGGAAGGAA) show a composition bias toward gly residues. The tract at residues 590–656 (GGAAGGAAGG…DGQPKPGPAA (67 aa)) is disordered. Residues 606–621 (GDAAGAAGDSTGDAAG) show a composition bias toward low complexity. Gly residues predominate over residues 622-635 (AAGGPSEGPAGDAG).

This sequence belongs to the heat shock protein 70 family.

Functionally, acts as a chaperone. In Cenarchaeum symbiosum (strain A), this protein is Chaperone protein DnaK.